Here is a 291-residue protein sequence, read N- to C-terminus: Acetyl-coenzyme A carboxylase carboxyl transferase subunit beta (291 aa).

The region spanning 23–291 (VYTKDPVSGE…TPASASVAKS (269 aa)) is the CoA carboxyltransferase N-terminal domain.

It belongs to the AccD/PCCB family. As to quaternary structure, acetyl-CoA carboxylase is a heterohexamer composed of biotin carboxyl carrier protein (AccB), biotin carboxylase (AccC) and two subunits each of ACCase subunit alpha (AccA) and ACCase subunit beta (AccD).

The protein localises to the cytoplasm. The catalysed reaction is N(6)-carboxybiotinyl-L-lysyl-[protein] + acetyl-CoA = N(6)-biotinyl-L-lysyl-[protein] + malonyl-CoA. It functions in the pathway lipid metabolism; malonyl-CoA biosynthesis; malonyl-CoA from acetyl-CoA: step 1/1. In terms of biological role, component of the acetyl coenzyme A carboxylase (ACC) complex. Biotin carboxylase (BC) catalyzes the carboxylation of biotin on its carrier protein (BCCP) and then the CO(2) group is transferred by the transcarboxylase to acetyl-CoA to form malonyl-CoA. In Opitutus terrae (strain DSM 11246 / JCM 15787 / PB90-1), this protein is Acetyl-coenzyme A carboxylase carboxyl transferase subunit beta.